A 164-amino-acid chain; its full sequence is UPF0114 protein KPK_0696 (164 aa).

Helical transmembrane passes span Leu-15 to Phe-35, Leu-53 to Val-73, Val-109 to Met-126, and Leu-136 to Leu-156.

This sequence belongs to the UPF0114 family.

Its subcellular location is the cell membrane. This is UPF0114 protein KPK_0696 from Klebsiella pneumoniae (strain 342).